We begin with the raw amino-acid sequence, 202 residues long: Large ribosomal subunit protein bL25 (202 aa).

It belongs to the bacterial ribosomal protein bL25 family. CTC subfamily. Part of the 50S ribosomal subunit; part of the 5S rRNA/L5/L18/L25 subcomplex. Contacts the 5S rRNA. Binds to the 5S rRNA independently of L5 and L18.

In terms of biological role, this is one of the proteins that binds to the 5S RNA in the ribosome where it forms part of the central protuberance. The protein is Large ribosomal subunit protein bL25 of Clostridium perfringens (strain ATCC 13124 / DSM 756 / JCM 1290 / NCIMB 6125 / NCTC 8237 / Type A).